Reading from the N-terminus, the 443-residue chain is MGQQQSGFGGRGNDRGAGDGEKKEKKKYEAPIPSRIGKKKKGSKGPDAASKLPAVTPHARCRLKLLKSERIKDYLLMEQEFIQNQERLKPQEERQEEERAKVDELRGTPMAVGSLEEIIDDQHAIVSTNVGSEHYVNIMSFVDKEQLEPGCSVLLNHKNHAVIGVLSDDTDPMVSVMKLEKAPQETYADVGGLDQQIQEIKEAVELPLTHPEYYEEMGIRPPKGVILYGCPGTGKTLLAKAVANQTSATFLRIVGSELIQKYLGDGPKMVRELFRVAEENAPSIVFIDEIDAVGTKRYDSNSGGEREIQRTMLELLNQLDGFDSRGDVKVLMATNRIESLDPALIRPGRIDRKIEFPLPDEKTKRRIFQIHTSRMTLGKEVNLEEFITAKDELSGADIKAMCTEAGLLALRERRMRVTMEDFQKSKENVLYRKKEGAPEELYL.

Residues 1–53 (MGQQQSGFGGRGNDRGAGDGEKKEKKKYEAPIPSRIGKKKKGSKGPDAASKLP) are disordered. Residues 12 to 29 (GNDRGAGDGEKKEKKKYE) are compositionally biased toward basic and acidic residues. Position 229–236 (229–236 (GCPGTGKT)) interacts with ATP.

The protein belongs to the AAA ATPase family.

It is found in the cytoplasm. The protein localises to the nucleus. The 26S proteasome is involved in the ATP-dependent degradation of ubiquitinated proteins. The regulatory (or ATPase) complex confers ATP dependency and substrate specificity to the 26S complex. May play a role in the degradation of microtubule severing protein mei-1. The protein is Probable 26S proteasome regulatory subunit 4 (rpt-2) of Caenorhabditis elegans.